We begin with the raw amino-acid sequence, 373 residues long: UDP-N-acetylenolpyruvoylglucosamine reductase (373 aa).

Positions leucine 30–aspartate 203 constitute an FAD-binding PCMH-type domain. Arginine 180 is an active-site residue. Serine 258 serves as the catalytic Proton donor. Glutamate 356 is an active-site residue.

It belongs to the MurB family. FAD is required as a cofactor.

Its subcellular location is the cytoplasm. It catalyses the reaction UDP-N-acetyl-alpha-D-muramate + NADP(+) = UDP-N-acetyl-3-O-(1-carboxyvinyl)-alpha-D-glucosamine + NADPH + H(+). It participates in cell wall biogenesis; peptidoglycan biosynthesis. Functionally, cell wall formation. The polypeptide is UDP-N-acetylenolpyruvoylglucosamine reductase (Psychrobacter arcticus (strain DSM 17307 / VKM B-2377 / 273-4)).